The primary structure comprises 205 residues: Heme-binding protein 2 (205 aa).

Residues Met-1–Ser-37 are disordered. Ala-2 is subject to N-acetylalanine. Ser-181 carries the post-translational modification Phosphoserine.

It belongs to the HEBP family. Monomer. Interacts with LRPPRC. May interact with BCL2L1; an interaction with BCL2L1 was observed using a peptide, but not with the full-length protein. The full-length protein would have to undergo a major conformation change for the interaction to occur. Interacts with PDCD6.

The protein resides in the cytoplasm. The protein localises to the mitochondrion. Its function is as follows. Can promote mitochondrial permeability transition and facilitate necrotic cell death under different types of stress conditions. May have low affinity for heme. This Mus musculus (Mouse) protein is Heme-binding protein 2 (Hebp2).